The sequence spans 184 residues: Probable RNA 2'-phosphotransferase (184 aa).

Belongs to the KptA/TPT1 family.

Removes the 2'-phosphate from RNA via an intermediate in which the phosphate is ADP-ribosylated by NAD followed by a presumed transesterification to release the RNA and generate ADP-ribose 1''-2''-cyclic phosphate (APPR&gt;P). May function as an ADP-ribosylase. This chain is Probable RNA 2'-phosphotransferase, found in Shigella boydii serotype 18 (strain CDC 3083-94 / BS512).